Consider the following 366-residue polypeptide: Eukaryotic translation initiation factor 3 subunit H (366 aa).

An MPN domain is found at 12–161 (VKVEALVVMK…LRAFRLSPKF (150 aa)).

It belongs to the eIF-3 subunit H family. As to quaternary structure, component of the eukaryotic translation initiation factor 3 (eIF-3) complex.

Its subcellular location is the cytoplasm. Component of the eukaryotic translation initiation factor 3 (eIF-3) complex, which is involved in protein synthesis of a specialized repertoire of mRNAs and, together with other initiation factors, stimulates binding of mRNA and methionyl-tRNAi to the 40S ribosome. The eIF-3 complex specifically targets and initiates translation of a subset of mRNAs involved in cell proliferation. This Emericella nidulans (strain FGSC A4 / ATCC 38163 / CBS 112.46 / NRRL 194 / M139) (Aspergillus nidulans) protein is Eukaryotic translation initiation factor 3 subunit H.